The chain runs to 504 residues: Sodium-coupled neutral amino acid transporter 3 (504 aa).

N-linked (GlcNAc...) asparagine glycosylation occurs at N74. 5 helical membrane passes run 83 to 103, 106 to 126, 144 to 164, 187 to 207, and 213 to 233; these read GILG…LFLL, VALL…VVGI, AAAL…LYII, MNGN…LALM, and LGYS…AVIY. Residues C240 and C275 are joined by a disulfide bond. N-linked (GlcNAc...) asparagine glycans are attached at residues N247, N248, N252, and N323. Transmembrane regions (helical) follow at residues 324–344, 366–386, 408–428, 431–451, and 471–491; these read LSIA…YLTF, ILCV…IVLF, VLIA…APNI, IFGV…PAIF, and ALCF…FIII.

It belongs to the amino acid/polyamine transporter 2 family.

The protein resides in the cell membrane. The protein localises to the basolateral cell membrane. It catalyses the reaction L-glutamine(out) + Na(+)(out) + H(+)(in) = L-glutamine(in) + Na(+)(in) + H(+)(out). It carries out the reaction L-asparagine(out) + Na(+)(out) + H(+)(in) = L-asparagine(in) + Na(+)(in) + H(+)(out). The enzyme catalyses L-histidine(out) + Na(+)(out) + H(+)(in) = L-histidine(in) + Na(+)(in) + H(+)(out). Functionally, symporter that cotransports specific neutral amino acids and sodium ions, coupled to an H(+) antiporter activity. Mainly participates in the glutamate-GABA-glutamine cycle in brain where it transports L-glutamine from astrocytes in the intercellular space for the replenishment of both neurotransmitters glutamate and gamma-aminobutyric acid (GABA) in neurons and also functions as the major influx transporter in ganglion cells mediating the uptake of glutamine. The transport activity is specific for L-glutamine, L-histidine and L-asparagine. The transport is electroneutral coupled to the cotransport of 1 Na(+) and the antiport of 1 H(+). The transport is pH dependent, saturable, Li(+) tolerant and functions in both direction depending on the concentration gradients of its substrates and cotransported ions. Also mediates an amino acid-gated H(+) conductance that is not stoichiometrically coupled to the amino acid transport but which influences the ionic gradients that drive the amino acid transport. In addition, may play a role in nitrogen metabolism, amino acid homeostasis, glucose metabolism and renal ammoniagenesis. The sequence is that of Sodium-coupled neutral amino acid transporter 3 from Homo sapiens (Human).